The chain runs to 359 residues: Alanine racemase, biosynthetic (359 aa).

Lys34 functions as the Proton acceptor; specific for D-alanine in the catalytic mechanism. Lys34 is modified (N6-(pyridoxal phosphate)lysine). Position 129 (Arg129) interacts with substrate. Tyr255 (proton acceptor; specific for L-alanine) is an active-site residue. Met303 is a binding site for substrate.

Belongs to the alanine racemase family. Requires pyridoxal 5'-phosphate as cofactor.

It catalyses the reaction L-alanine = D-alanine. The protein operates within amino-acid biosynthesis; D-alanine biosynthesis; D-alanine from L-alanine: step 1/1. It participates in cell wall biogenesis; peptidoglycan biosynthesis. Catalyzes the interconversion of L-alanine and D-alanine. Provides the D-alanine required for cell wall biosynthesis. The sequence is that of Alanine racemase, biosynthetic (alr) from Escherichia coli O6:H1 (strain CFT073 / ATCC 700928 / UPEC).